The following is a 175-amino-acid chain: ATP synthase subunit b, chloroplastic (175 aa).

A helical transmembrane segment spans residues 24 to 46; sequence VLNLAVVLAIVLTYVGDALRGLL.

The protein belongs to the ATPase B chain family. F-type ATPases have 2 components, F(1) - the catalytic core - and F(0) - the membrane proton channel. F(1) has five subunits: alpha(3), beta(3), gamma(1), delta(1), epsilon(1). F(0) has four main subunits: a(1), b(1), b'(1) and c(10-14). The alpha and beta chains form an alternating ring which encloses part of the gamma chain. F(1) is attached to F(0) by a central stalk formed by the gamma and epsilon chains, while a peripheral stalk is formed by the delta, b and b' chains.

It localises to the plastid. It is found in the chloroplast thylakoid membrane. Functionally, f(1)F(0) ATP synthase produces ATP from ADP in the presence of a proton or sodium gradient. F-type ATPases consist of two structural domains, F(1) containing the extramembraneous catalytic core and F(0) containing the membrane proton channel, linked together by a central stalk and a peripheral stalk. During catalysis, ATP synthesis in the catalytic domain of F(1) is coupled via a rotary mechanism of the central stalk subunits to proton translocation. In terms of biological role, component of the F(0) channel, it forms part of the peripheral stalk, linking F(1) to F(0). The protein is ATP synthase subunit b, chloroplastic of Chlorella vulgaris (Green alga).